Consider the following 68-residue polypeptide: MLKPSINELLTVVDSRYSLVVATAKRARQIIDGAKIKVDSDSNKPVSTAAKEIYEGKVTYIKTDEDER.

The protein belongs to the RNA polymerase subunit omega family. In terms of assembly, the RNAP catalytic core consists of 2 alpha, 1 beta, 1 beta' and 1 omega subunit. When a sigma factor is associated with the core the holoenzyme is formed, which can initiate transcription.

The enzyme catalyses RNA(n) + a ribonucleoside 5'-triphosphate = RNA(n+1) + diphosphate. Promotes RNA polymerase assembly. Latches the N- and C-terminal regions of the beta' subunit thereby facilitating its interaction with the beta and alpha subunits. This Alkaliphilus metalliredigens (strain QYMF) protein is DNA-directed RNA polymerase subunit omega.